The chain runs to 134 residues: MDPQTAPSRALLLLLFLHLAFLGGRSHPLGSPGSASDLETSGLQEQRNHLQGKLSELQVEQTSLEPLQESPRPTGVWKSREVATEGIRGHRKMVLYTLRAPRSPKMVQGSGCFGRKMDRISSSSGLGCKVLRRH.

The signal sequence occupies residues 1-26 (MDPQTAPSRALLLLLFLHLAFLGGRS). Residue S41 is glycosylated (O-linked (Xyl...) (chondroitin sulfate) serine). T62 carries O-linked (HexNAc...) threonine; Partial glycosylation. 2 O-linked (HexNAc...) serine glycosylation sites follow: S63 and S70. The O-linked (HexNAc...) threonine glycan is linked to T74. An O-linked (HexNAc...) serine glycan is attached at S79. The O-linked (HexNAc...) threonine; Partial glycan is linked to T84. T97 is a glycosylation site (O-linked (HexNAc...) threonine). A disulfide bridge links C112 with C128.

This sequence belongs to the natriuretic peptide family. In terms of processing, the precursor molecule is proteolytically cleaved by the endoproteases FURIN or CORIN at Arg-102 to produce brain natriuretic peptide 32 and NT-proBNP. This likely occurs after it has been secreted into the blood, either during circulation or in the target cells. CORIN also cleaves the precursor molecule at additional residues including Arg-99 and possibly Lys-105. In patients with heart failure, processing and degradation of natriuretic peptides B occurs but is delayed, possibly due to a decrease in enzyme level or activity of CORIN and DPP4. Post-translationally, undergoes further proteolytic cleavage by various proteases such as DPP4, MME and possibly FAP, to give rise to a variety of shorter peptides. Cleaved at Pro-104 by the prolyl endopeptidase FAP (seprase) activity (in vitro). Degraded by IDE. During IDE degradation, the resulting products initially increase the activation of NPR1 and can also stimulate NPR2 to produce cGMP before the fragments are completely degraded and inactivated by IDE (in vitro). O-glycosylated on at least seven residues. In cardiomyocytes, glycosylation at Thr-97 is essential for the stability and processing of the extracellular natriuretic peptides B. Glycosylation, especially at Thr-97, may also be important for brain natriuretic peptide 32 stability and/or extracellular distribution. Glycosylation at Thr-97 appears to inhibit FURIN- or CORIN-mediated proteolytic processing, at least in HEK293 cells. In terms of tissue distribution, detected in the cardiac atria (at protein level). Detected in the kidney distal tubular cells (at protein level).

The protein resides in the secreted. Cardiac hormone that plays a key role in mediating cardio-renal homeostasis. May also function as a paracrine antifibrotic factor in the heart. Acts by specifically binding and stimulating NPR1 to produce cGMP, which in turn activates effector proteins that drive various biological responses. Involved in regulating the extracellular fluid volume and maintaining the fluid-electrolyte balance through natriuresis, diuresis, vasorelaxation, and inhibition of renin and aldosterone secretion. Binds the clearance receptor NPR3. Functionally, may affect cardio-renal homeostasis. Able to promote the production of cGMP although its potency is very low compared to brain natriuretic peptide 32. Its function is as follows. May have a role in cardio-renal homeostasis. Able to promote the production of cGMP. The chain is Natriuretic peptides B (NPPB) from Homo sapiens (Human).